The primary structure comprises 142 residues: Large ribosomal subunit protein uL13 (142 aa).

Belongs to the universal ribosomal protein uL13 family. As to quaternary structure, part of the 50S ribosomal subunit.

Its function is as follows. This protein is one of the early assembly proteins of the 50S ribosomal subunit, although it is not seen to bind rRNA by itself. It is important during the early stages of 50S assembly. The chain is Large ribosomal subunit protein uL13 from Aliivibrio fischeri (strain ATCC 700601 / ES114) (Vibrio fischeri).